The primary structure comprises 603 residues: Proline--tRNA ligase (603 aa).

This sequence belongs to the class-II aminoacyl-tRNA synthetase family. ProS type 1 subfamily. As to quaternary structure, homodimer.

The protein localises to the cytoplasm. It catalyses the reaction tRNA(Pro) + L-proline + ATP = L-prolyl-tRNA(Pro) + AMP + diphosphate. In terms of biological role, catalyzes the attachment of proline to tRNA(Pro) in a two-step reaction: proline is first activated by ATP to form Pro-AMP and then transferred to the acceptor end of tRNA(Pro). As ProRS can inadvertently accommodate and process non-cognate amino acids such as alanine and cysteine, to avoid such errors it has two additional distinct editing activities against alanine. One activity is designated as 'pretransfer' editing and involves the tRNA(Pro)-independent hydrolysis of activated Ala-AMP. The other activity is designated 'posttransfer' editing and involves deacylation of mischarged Ala-tRNA(Pro). The misacylated Cys-tRNA(Pro) is not edited by ProRS. This chain is Proline--tRNA ligase, found in Paenarthrobacter aurescens (strain TC1).